The primary structure comprises 208 residues: Uracil phosphoribosyltransferase (208 aa).

Residues arginine 78, arginine 103, and 130-138 (DPMFATGGT) each bind 5-phospho-alpha-D-ribose 1-diphosphate. Residues isoleucine 193 and 198-200 (GDA) contribute to the uracil site. Aspartate 199 is a 5-phospho-alpha-D-ribose 1-diphosphate binding site.

This sequence belongs to the UPRTase family. Mg(2+) serves as cofactor.

It carries out the reaction UMP + diphosphate = 5-phospho-alpha-D-ribose 1-diphosphate + uracil. It functions in the pathway pyrimidine metabolism; UMP biosynthesis via salvage pathway; UMP from uracil: step 1/1. With respect to regulation, allosterically activated by GTP. Functionally, catalyzes the conversion of uracil and 5-phospho-alpha-D-ribose 1-diphosphate (PRPP) to UMP and diphosphate. The sequence is that of Uracil phosphoribosyltransferase from Campylobacter concisus (strain 13826).